The sequence spans 786 residues: Rho GTPase-activating protein 10 (786 aa).

The 256-residue stretch at 7–262 (EFSDCYLDSP…IRQNPKDHKR (256 aa)) folds into the BAR domain. In terms of domain architecture, PH spans 265-372 (QFTAEGYLYV…WLEALGGKEA (108 aa)). A Rho-GAP domain is found at 389 to 574 (AQLDKMGFTI…ILIENHEKIF (186 aa)). Disordered stretches follow at residues 576–608 (TPPD…QRTK) and 621–727 (EDGD…PPES). Over residues 599-608 (QSKRQGQRTK) the composition is skewed to basic residues. Residues 634–651 (PTSSLDSLSSPSPVTTAV) are compositionally biased toward low complexity. The segment covering 676–688 (IPGQTRSSMVQWL) has biased composition (polar residues). The span at 689 to 712 (NPQSPTTTSSNSAVTPLSPGSSPF) shows a compositional bias: low complexity. The SH3 domain occupies 728-786 (IRSRKARAVYPCEAEHSSELSFEIGAIFEDVQTSREPGWLEGTLNGKRGLIPQNYVKLL).

As to quaternary structure, interacts with PKN3. Interacts with caspase-activated PAK2 proteolytic fragment PAK-2p34; the interaction does not affect GRAF2/ARHGAP10 GTPase activation activity towards RHOA and CDC42. Interacts via its SH3 domain with PTK2/FAK1. Interacts with PTK2B/PYK2; the interaction negatively regulates GRAF2/ARHGAP10 GTPase-activating activity. Interacts with MICAL1 and WDR44; complex formation might transit from GRAF2/ARHGAP10-MICAL1 to GRAF2/ARHGAP10-WDR44 complexes. In terms of processing, phosphorylated. Phosphorylated in vitro by constitutive active PKN3. As to expression, high levels of expression in heart and skeletal muscle.

It is found in the cytoplasm. It localises to the perinuclear region. The protein localises to the cell membrane. Its subcellular location is the endosome membrane. Functionally, GTPase-activating protein that catalyzes the conversion of active GTP-bound Rho GTPases to their inactive GDP-bound form, thus suppressing various Rho GTPase-mediated cellular processes. Also converts Cdc42 to an inactive GDP-bound state. Essential for PTKB2 regulation of cytoskeletal organization via Rho family GTPases. Inhibits PAK2 proteolytic fragment PAK-2p34 kinase activity and changes its localization from the nucleus to the perinuclear region. Stabilizes PAK-2p34 thereby increasing stimulation of cell death. Associates with MICAL1 on the endosomal membrane to promote Rab8-Rab10-dependent tubule extension. After dissociation with MICAL1, recruits WDR44 which connects the endoplasmic reticulum (ER) with the endosomal tubule, thereby participating in the export of a subset of neosynthesized proteins. The protein is Rho GTPase-activating protein 10 (ARHGAP10) of Homo sapiens (Human).